A 320-amino-acid polypeptide reads, in one-letter code: Phosphate acyltransferase (320 aa).

This sequence belongs to the PlsX family. As to quaternary structure, homodimer. Probably interacts with PlsY.

It localises to the cytoplasm. It catalyses the reaction a fatty acyl-[ACP] + phosphate = an acyl phosphate + holo-[ACP]. It participates in lipid metabolism; phospholipid metabolism. In terms of biological role, catalyzes the reversible formation of acyl-phosphate (acyl-PO(4)) from acyl-[acyl-carrier-protein] (acyl-ACP). This enzyme utilizes acyl-ACP as fatty acyl donor, but not acyl-CoA. The sequence is that of Phosphate acyltransferase from Syntrophomonas wolfei subsp. wolfei (strain DSM 2245B / Goettingen).